The primary structure comprises 71 residues: Protein PSY2 (71 aa).

A signal peptide spans Met1–Ser20. Positions Ser21–Glu46 are excised as a propeptide. A Sulfotyrosine modification is found at Tyr48. Residues Asp50–Pro71 are disordered. The segment covering Val61–Pro71 has biased composition (polar residues). At Pro62 the chain carries 4-hydroxyproline. The O-linked (Ara...) hydroxyproline glycan is linked to Pro62. Positions Ala65–Pro71 are excised as a propeptide.

It belongs to the sulfated-peptide plant hormone family. The sulfation and the glycosylation are required for full activity.

The protein localises to the secreted. Functionally, promotes cellular proliferation and expansion. This Arabidopsis thaliana (Mouse-ear cress) protein is Protein PSY2 (PSY2).